The following is a 264-amino-acid chain: Thymidylate synthase (264 aa).

Arg21 provides a ligand contact to dUMP. (6R)-5,10-methylene-5,6,7,8-tetrahydrofolate is bound at residue His51. 126-127 is a dUMP binding site; it reads RR. Cys146 functions as the Nucleophile in the catalytic mechanism. Residues 166 to 169, Asn177, and 207 to 209 contribute to the dUMP site; these read RSAD and HIY. (6R)-5,10-methylene-5,6,7,8-tetrahydrofolate is bound at residue Asp169. A (6R)-5,10-methylene-5,6,7,8-tetrahydrofolate-binding site is contributed by Ala263.

This sequence belongs to the thymidylate synthase family. Bacterial-type ThyA subfamily. As to quaternary structure, homodimer.

Its subcellular location is the cytoplasm. The catalysed reaction is dUMP + (6R)-5,10-methylene-5,6,7,8-tetrahydrofolate = 7,8-dihydrofolate + dTMP. Its pathway is pyrimidine metabolism; dTTP biosynthesis. Functionally, catalyzes the reductive methylation of 2'-deoxyuridine-5'-monophosphate (dUMP) to 2'-deoxythymidine-5'-monophosphate (dTMP) while utilizing 5,10-methylenetetrahydrofolate (mTHF) as the methyl donor and reductant in the reaction, yielding dihydrofolate (DHF) as a by-product. This enzymatic reaction provides an intracellular de novo source of dTMP, an essential precursor for DNA biosynthesis. The protein is Thymidylate synthase of Vesicomyosocius okutanii subsp. Calyptogena okutanii (strain HA).